A 370-amino-acid chain; its full sequence is Versatile peroxidase VPS1 (370 aa).

The first 20 residues, 1–20 (MAFAKLSAFVLALGATVALG), serve as a signal peptide directing secretion. A propeptide spanning residues 21–31 (ESPTHRCLNKR) is cleaved from the precursor. 4 disulfides stabilise this stretch: C34/C46, C45/C315, C65/C151, and C279/C344. Positions 67 and 71 each coordinate Mn(2+). The Proton acceptor role is filled by H78. Positions 79, 97, 99, and 101 each coordinate Ca(2+). N133 is a glycosylation site (N-linked (GlcNAc...) asparagine). Catalysis depends on W201, which acts as the Tryptophan radical intermediate. Position 206 (H206) interacts with heme b. Ca(2+) is bound at residue T207. 210–214 (AADHV) is a heme b binding site. D212 contacts Mn(2+). Positions 224, 226, 229, and 231 each coordinate Ca(2+).

The protein belongs to the peroxidase family. Ligninase subfamily. It depends on heme b as a cofactor. Ca(2+) is required as a cofactor.

Its subcellular location is the secreted. It catalyses the reaction 1-(4-hydroxy-3-methoxyphenyl)-2-(2-methoxyphenoxy)propane-1,3-diol + H2O2 = guaiacol + vanillin + glycolaldehyde + H2O. The enzyme catalyses 2 Mn(2+) + H2O2 + 2 H(+) = 2 Mn(3+) + 2 H2O. In terms of biological role, a versatile ligninolytic peroxidase that combines the substrate specificity characteristics of the two other ligninolytic peroxidases, manganese peroxidase and lignin peroxidase. The protein is Versatile peroxidase VPS1 (vps1) of Pleurotus eryngii (Boletus of the steppes).